Consider the following 518-residue polypeptide: Gypsy retrotransposon integrase-like protein 1 (518 aa).

The 159-residue stretch at 135-293 folds into the Integrase catalytic domain; sequence VVGNPWSVVT…PYFQMFNRNP (159 aa). The segment at 326 to 348 is disordered; sequence NQTPAAGQMESSTSEELSKSKVA. Residue Ser-498 is modified to Phosphoserine.

This chain is Gypsy retrotransposon integrase-like protein 1 (GIN1), found in Rattus norvegicus (Rat).